A 146-amino-acid polypeptide reads, in one-letter code: Transcriptional regulator MraZ (146 aa).

SpoVT-AbrB domains lie at 9-55 (ASAL…PRPA) and 81-124 (AMDV…DVQR).

Belongs to the MraZ family. In terms of assembly, forms oligomers.

The protein localises to the cytoplasm. It localises to the nucleoid. The chain is Transcriptional regulator MraZ from Methylibium petroleiphilum (strain ATCC BAA-1232 / LMG 22953 / PM1).